The chain runs to 220 residues: Ribose-5-phosphate isomerase A (220 aa).

Substrate-binding positions include 28-31, 81-84, and 94-97; these read TGST, DGAD, and KGGG. The active-site Proton acceptor is Glu-103. Lys-121 is a substrate binding site.

It belongs to the ribose 5-phosphate isomerase family. In terms of assembly, homodimer.

It carries out the reaction aldehydo-D-ribose 5-phosphate = D-ribulose 5-phosphate. Its pathway is carbohydrate degradation; pentose phosphate pathway; D-ribose 5-phosphate from D-ribulose 5-phosphate (non-oxidative stage): step 1/1. Functionally, catalyzes the reversible conversion of ribose-5-phosphate to ribulose 5-phosphate. In Hydrogenovibrio crunogenus (strain DSM 25203 / XCL-2) (Thiomicrospira crunogena), this protein is Ribose-5-phosphate isomerase A.